A 235-amino-acid chain; its full sequence is Ribonuclease 3 (235 aa).

In terms of domain architecture, RNase III spans 6–131; that stretch reads IDQLFKLTGH…LIAVMYLDGG (126 aa). E44 is a binding site for Mg(2+). Residue D48 is part of the active site. D117 and E120 together coordinate Mg(2+). The active site involves E120. One can recognise a DRBM domain in the interval 156 to 225; sequence DAKTELQEWA…AEKILRREGV (70 aa).

This sequence belongs to the ribonuclease III family. Homodimer. Mg(2+) is required as a cofactor.

Its subcellular location is the cytoplasm. The enzyme catalyses Endonucleolytic cleavage to 5'-phosphomonoester.. Digests double-stranded RNA. Involved in the processing of primary rRNA transcript to yield the immediate precursors to the large and small rRNAs (23S and 16S). Processes some mRNAs, and tRNAs when they are encoded in the rRNA operon. Processes pre-crRNA and tracrRNA of type II CRISPR loci if present in the organism. In Bartonella tribocorum (strain CIP 105476 / IBS 506), this protein is Ribonuclease 3.